The primary structure comprises 159 residues: Protransforming growth factor alpha (159 aa).

The first 23 residues, 1–23 (MVPAAGQLALLALGILVAVCQAL), serve as a signal peptide directing secretion. Residues 24-38 (ENSTSPLSDSPVAAA) constitute a propeptide, removed in mature form. Residues 24–97 (ENSTSPLSDS…AVVAASQKKQ (74 aa)) are Extracellular-facing. N25 carries an N-linked (GlcNAc...) asparagine glycan. Residues 42–82 (HFNKCPDSHTQYCFHGTCRFLVQEEKPACVCHSGYVGVRCE) enclose the EGF-like domain. Disulfide bonds link C46/C59, C54/C70, and C72/C81. A propeptide spans 89–159 (VVAASQKKQA…TACCHSETVV (71 aa)) (removed in mature form). Residues 98–123 (AITALVVVSIVALAVLIITCVLIHCC) form a helical membrane-spanning segment. At 124–159 (QVRKHCEWCRALVCRHEKPSALLKGRTACCHSETVV) the chain is on the cytoplasmic side. 2 S-palmitoyl cysteine lipidation sites follow: C152 and C153.

As to quaternary structure, interacts with the PDZ domains of MAGI3, SDCBP and SNTA1. The interaction with SDCBP, is required for the targeting to the cell surface. In the endoplasmic reticulum, in its immature form (i.e. with a prosegment and lacking full N-glycosylation), interacts with CNIH. In the Golgi apparatus, may form a complex with CNIH and GORASP2. Interacts (via cytoplasmic C-terminal domain) with NKD2.

The protein localises to the secreted. The protein resides in the extracellular space. Its subcellular location is the cell membrane. Its function is as follows. TGF alpha is a mitogenic polypeptide that is able to bind to the EGF receptor/EGFR and to act synergistically with TGF beta to promote anchorage-independent cell proliferation in soft agar. This is Protransforming growth factor alpha (Tgfa) from Rattus norvegicus (Rat).